The following is a 348-amino-acid chain: Rhodopsin (348 aa).

At M1 the chain carries N-acetylmethionine. Over 1–36 (MNGTEGPNFYVPFSNVTGVVRSPFEQPQYYLAEPWQ) the chain is Extracellular. N-linked (GlcNAc...) asparagine glycans are attached at residues N2 and N15. A helical transmembrane segment spans residues 37-61 (FSMLAAYMFLLIVLGFPINFLTLYV). Topologically, residues 62–73 (TVQHKKLRTPLN) are cytoplasmic. The helical transmembrane segment at 74-96 (YILLNLAVADLFMVFGGFTTTLY) threads the bilayer. Topologically, residues 97–110 (TSLHGYFVFGPTGC) are extracellular. C110 and C187 are joined by a disulfide. A helical transmembrane segment spans residues 111 to 133 (NLEGFFATLGGEIALWSLVVLAI). The 'Ionic lock' involved in activated form stabilization motif lies at 134 to 136 (ERY). Topologically, residues 134-152 (ERYVVVCKPMSNFRFGENH) are cytoplasmic. Residues 153-173 (AIMGVVFTWIMALACAAPPLV) form a helical membrane-spanning segment. Residues 174–202 (GWSRYIPEGMQCSCGIDYYTLKPEVNNES) lie on the Extracellular side of the membrane. E201 is a binding site for Zn(2+). Residues 203-224 (FVIYMFVVHFTIPMIVIFFCYG) traverse the membrane as a helical segment. The Cytoplasmic segment spans residues 225 to 252 (QLVFTVKEAAAQQQESATTQKAEKEVTR). The chain crosses the membrane as a helical span at residues 253 to 274 (MVIIMVIFFLICWLPYASVAFY). The Extracellular portion of the chain corresponds to 275-286 (IFTHQGSNFGPI). Residue Q279 coordinates Zn(2+). Residues 287 to 308 (FMTLPAFFAKSSSIYNPVIYIM) traverse the membrane as a helical segment. K296 carries the post-translational modification N6-(retinylidene)lysine. Over 309–348 (LNKQFRNCMLTTLCCGKNPLGDDDASATASKTETSQVAPA) the chain is Cytoplasmic. S-palmitoyl cysteine attachment occurs at residues C322 and C323. The segment at 330–348 (DDDASATASKTETSQVAPA) is interaction with SAG. Phosphoserine is present on S334. T336 is subject to Phosphothreonine. S338 bears the Phosphoserine mark. Phosphothreonine is present on residues T340 and T342. A Phosphoserine modification is found at S343.

This sequence belongs to the G-protein coupled receptor 1 family. Opsin subfamily. Homodimer. May form a complex composed of RHO, GRK1 and RCVRN in a Ca(2+)-dependent manner; RCVRN prevents the interaction between GRK1 and RHO. Interacts with GRK1. Interacts (phosphorylated form) with SAG. Interacts with GNAT1. Interacts with GNAT3. SAG and G-proteins compete for a common binding site. Interacts with PRCD; the interaction promotes PRCD stability. Forms a complex with ASAP1 and ARF4. Forms a complex with ASAP1, RAB11A, Rabin8/RAB3IP, ARF4 and RAB11FIP3; the complex regulates Golgi-to-cilia rhodopsin/RHO transport in photoreceptors. Phosphorylated on some or all of the serine and threonine residues present in the C-terminal region. Post-translationally, contains one covalently linked retinal chromophore. Upon light absorption, the covalently bound 11-cis-retinal is converted to all-trans-retinal. After hydrolysis of the Schiff base and release of the covalently bound all-trans-retinal, active rhodopsin is regenerated by binding of a fresh molecule of 11-cis-retinal. In terms of tissue distribution, rod-shaped photoreceptor cells in the retina (at protein level).

The protein resides in the membrane. It is found in the cell projection. The protein localises to the cilium. Its subcellular location is the photoreceptor outer segment. Functionally, photoreceptor required for image-forming vision at low light intensity. Required for photoreceptor cell viability after birth. Light-induced isomerization of 11-cis to all-trans retinal triggers a conformational change that activates signaling via G-proteins. Subsequent receptor phosphorylation mediates displacement of the bound G-protein alpha subunit by the arrestin SAG and terminates signaling. The polypeptide is Rhodopsin (Rho) (Mus musculus (Mouse)).